We begin with the raw amino-acid sequence, 113 residues long: Probable 4-amino-4-deoxy-L-arabinose-phosphoundecaprenol flippase subunit ArnE (113 aa).

3 helical membrane passes run 39–59 (IFWL…WLRL), 62–82 (ILPL…VTLI), and 91–111 (VNVK…LMSM). One can recognise an EamA domain in the interval 42–111 (LITAIAMLGF…IMLGIVLMSM (70 aa)).

This sequence belongs to the ArnE family. Heterodimer of ArnE and ArnF.

It is found in the cell inner membrane. It participates in bacterial outer membrane biogenesis; lipopolysaccharide biosynthesis. Its function is as follows. Translocates 4-amino-4-deoxy-L-arabinose-phosphoundecaprenol (alpha-L-Ara4N-phosphoundecaprenol) from the cytoplasmic to the periplasmic side of the inner membrane. This is Probable 4-amino-4-deoxy-L-arabinose-phosphoundecaprenol flippase subunit ArnE from Proteus mirabilis (strain HI4320).